A 439-amino-acid chain; its full sequence is Histone acetyltransferase GCN5 (439 aa).

Basic and acidic residues-rich tracts occupy residues 1–28 and 39–59; these read MVTKHQIEEDHLDGATTDPEVKRVKLEN and ETNKQEGTDKENKGKFEKETE. Positions 1–59 are disordered; sequence MVTKHQIEEDHLDGATTDPEVKRVKLENNVEEIQPEQAETNKQEGTDKENKGKFEKETE. The 156-residue stretch at 100–255 folds into the N-acetyltransferase domain; that stretch reads IEFRVVNNDN…GGTLMQCSML (156 aa). E173 acts as the Proton donor/acceptor in catalysis. Residues 177-179, 184-190, and 216-219 contribute to the acetyl-CoA site; these read CAI, QVRGYGA, and YAIG. The Bromo domain maps to 327–431; the sequence is PKRGPHDAAI…KFFNNKVKEI (105 aa).

This sequence belongs to the acetyltransferase family. GCN5 subfamily. As to quaternary structure, component of the 1.8 MDa SAGA (Spt-Ada-Gcn5 acetyltransferase) complex, which is composed of 19 subunits TRA1, SPT7, TAF5, NGG1/ADA3, SGF73, SPT20/ADA5, SPT8, TAF12, TAF6, HFI1/ADA1, UBP8, GCN5, ADA2, SPT3, SGF29, TAF10, TAF9, SGF11 and SUS1. The SAGA complex is composed of 4 modules, namely the HAT (histone acetyltransferase) module (GCN5, ADA2, NGG1/ADA3 and SGF29), the DUB (deubiquitinating) module (UBP8, SGF11, SGF73 and SUS1), the core or TAF (TBP-associated factor) module (TAF5, TAF6, TAF9, TAF10 and TAF12), and the Tra1 or SPT (Suppressor of Ty) module (TRA1, HFI1/ADA1, SPT3, SPT7, SPT8 and SPT20/ADA5). The Tra1/SPT module binds activators, the core module recruits TBP (TATA-binding protein), the HAT module contains the histone H3 acetyltransferase GCN5, and the DUB module comprises the histone H2B deubiquitinase UBP8. Also identified in an altered form of SAGA, named SALSA (SAGA altered, Spt8 absent) or SLIK (SAGA-like) complex, which contains a C-terminal truncated form of SPT7 and is missing SPT8. However, it has been shown that the SAGA and SAGA-like SALSA/SLIK transcriptional coactivators are structurally and biochemically equivalent. Component of the 0.8 MDa ADA complex, a HAT complex distinct from SAGA, which at least consists of ADA2, NGG1/ADA3, AHC1, AHC2, SGF29 and GCN5. Component of an ADA/GCN5 complex that consists of HFI1/ADA1, ADA2, NGG1/ADA3, SPT20/ADA5 and GCN5 and probably is a subcomplex of SAGA.

The protein resides in the nucleus. The protein localises to the cytoplasm. It carries out the reaction L-lysyl-[protein] + acetyl-CoA = N(6)-acetyl-L-lysyl-[protein] + CoA + H(+). The catalysed reaction is (2E)-butenoyl-CoA + L-lysyl-[protein] = N(6)-(2E)-butenoyl-L-lysyl-[protein] + CoA + H(+). Its function is as follows. Histone acetyltransferase that acetylates histone H2B to form H2BK11ac and H2BK16ac, histone H3 to form H3K9ac, H3K14ac, H3K18ac, H3K23ac, H3K27ac and H3K36ac, with a lower preference histone H4 to form H4K8ac and H4K16ac, and contributes to H2A.Z acetylation. Acetylation of histones gives a specific tag for epigenetic transcription activation and elongation. Operates in concert with certain DNA-binding transcriptional activators such as GCN4 or HAP2/3/4. Its acetyltransferase activity seems to be dependent on the association in different multisubunit complexes. Component of the transcription coactivator SAGA complex. SAGA acts as a general cofactor required for essentially all RNA polymerase II transcription. At the promoters, SAGA is required for transcription pre-initiation complex (PIC) recruitment. It influences RNA polymerase II transcriptional activity through different activities such as TBP interaction (via core/TAF module) and promoter selectivity, interaction with transcription activators (via Tra1/SPT module), and chromatin modification through histone acetylation (via HAT module) and deubiquitination (via DUB module). SAGA preferentially acetylates histones H3 (to form H3K9ac, H3K14ac, H3K18ac and H3K23ac) and H2B and deubiquitinates histone H2B. SAGA interacts with DNA via upstream activating sequences (UASs). Also identified in a modified version of SAGA named SALSA or SLIK. The cleavage of SPT7 and the absence of the SPT8 subunit in SLIK neither drive any major conformational differences in its structure compared with SAGA, nor significantly affect HAT, DUB, or DNA-binding activities. Component of the ADA histone acetyltransferase complex, which preferentially acetylates nucleosomal histones H3 (to form H3K14ac and H3K18ac) and H2B. In addition to histone acetyltransferase, can use different acyl-CoA substrates, such as (2E)-butenoyl-CoA (crotonyl-CoA) and is able to mediate histone crotonylation. Controls the metaphase-to-anaphase transition and is required for correct chromosome segregation and centromere/kinetochore function in mitosis. May be involved in response to DNA damage by genotoxic agents. This Saccharomyces cerevisiae (strain ATCC 204508 / S288c) (Baker's yeast) protein is Histone acetyltransferase GCN5.